The chain runs to 808 residues: Putative dimethyl sulfoxide reductase chain YnfE (808 aa).

Positions 1-43 (MSKNERMVGISRRTLVKSTAIGSLALAAGGFSLPFTLRNAAAA) form a signal peptide, tat-type signal. Residues 49–110 (EKVVWGACSV…SIRRRINHPD (62 aa)) enclose the 4Fe-4S Mo/W bis-MGD-type domain. Cys-56, Cys-60, Cys-64, and Cys-96 together coordinate [4Fe-4S] cluster. Ser-196 serves as a coordination point for Mo-bis(molybdopterin guanine dinucleotide).

The protein belongs to the prokaryotic molybdopterin-containing oxidoreductase family. It depends on [4Fe-4S] cluster as a cofactor. Mo-bis(molybdopterin guanine dinucleotide) serves as cofactor. In terms of processing, exported by the Tat system. The position of the signal peptide cleavage has not been experimentally proven.

The protein localises to the cell membrane. Terminal reductase during anaerobic growth on various sulfoxide and N-oxide compounds. The sequence is that of Putative dimethyl sulfoxide reductase chain YnfE (ynfE) from Escherichia coli (strain K12).